The chain runs to 640 residues: Probable inactive receptor kinase At3g08680 (640 aa).

The signal sequence occupies residues 1–22 (MMKIIAAFLFLLVTTFVSRCLS). LRR repeat units follow at residues 93–115 (ALRI…ILSL), 117–138 (FIRS…VLSH), 139–162 (RLVN…QNLT), 163–185 (QLTD…PPRL), and 186–206 (KYLN…VKSF). The segment at 222 to 249 (LTPCPENTTAPSPSPTTPTEGPGTTNIG) is disordered. The segment covering 226–247 (PENTTAPSPSPTTPTEGPGTTN) has biased composition (low complexity). Residues 260-280 (GAIVGIAVGGSVLLFIILAII) form a helical membrane-spanning segment. The disordered stretch occupies residues 289–315 (DGGQDSTAVPKAKPGRSDNKAEEFGSG). Positions 341 to 614 (RASAEVLGKG…EEVVNMMEEI (274 aa)) constitute a Protein kinase domain. Position 343 is a phosphoserine (Ser343). 347–355 (LGKGSYGTT) is an ATP binding site. Thr364 carries the post-translational modification Phosphothreonine. Position 369 (Lys369) interacts with ATP. A phosphothreonine mark is found at Thr441, Thr514, and Thr564. A disordered region spans residues 612–640 (EEIRPSGSGPGSGNRASSPEMIRSSDSPV).

It belongs to the protein kinase superfamily. Tyr protein kinase family.

The protein resides in the membrane. The protein is Probable inactive receptor kinase At3g08680 of Arabidopsis thaliana (Mouse-ear cress).